Reading from the N-terminus, the 131-residue chain is M-zodatoxin-Lt8m (131 aa).

Positions 1-20 (MKYFVVALALVAAFACIAES) are cleaved as a signal peptide. Positions 21–60 (KPAESEHELAEVEEENELADLEDAVWLEHLADLSDLEEAR) are excised as a propeptide.

It belongs to the cationic peptide 06 (cytoinsectotoxin) family. In terms of tissue distribution, expressed by the venom gland.

It localises to the secreted. Its function is as follows. Insecticidal, cytolytic and antimicrobial peptide. Forms voltage-dependent, ion-permeable channels in membranes. At high concentration causes cell membrane lysis. The polypeptide is M-zodatoxin-Lt8m (cit 1-13) (Lachesana tarabaevi (Spider)).